Reading from the N-terminus, the 183-residue chain is Capsid protein (183 aa).

The segment at 136 to 183 is disordered; it reads NAPILSTLPETTVVRRRGRSPRRRTPSPRRRRSQSPRRRRSQSRESQC. A compositionally biased stretch (basic residues) spans 149 to 176; it reads VRRRGRSPRRRTPSPRRRRSQSPRRRRS. Phosphoserine; by host occurs at positions 155, 162, and 170. A 1; half-length repeat occupies 155–161; it reads SPRRRTP. The interval 155–177 is 3 X 8 AA repeats of S-P-R-R-R-[PR]-S-Q; sequence SPRRRTPSPRRRRSQSPRRRRSQ. A Bipartite nuclear localization signal motif is present at residues 158–175; that stretch reads RRTPSPRRRRSQSPRRRR. 2 tandem repeats follow at residues 162 to 169 and 170 to 177. An RNA binding region spans residues 177-183; it reads QSRESQC.

This sequence belongs to the orthohepadnavirus core antigen family. Homodimerizes, then multimerizes. Interacts with cytosol exposed regions of viral L glycoprotein present in the reticulum-to-Golgi compartment. Interacts with human FLNB. Phosphorylated form interacts with host importin alpha; this interaction depends on the exposure of the NLS, which itself depends upon genome maturation and/or phosphorylation of the capsid protein. Interacts with host NUP153. Phosphorylated by host SRPK1, SRPK2, and maybe protein kinase C or GAPDH. Phosphorylation is critical for pregenomic RNA packaging. Protein kinase C phosphorylation is stimulated by HBx protein and may play a role in transport of the viral genome to the nucleus at the late step during the viral replication cycle.

The protein resides in the virion. It localises to the host cytoplasm. Functionally, self assembles to form an icosahedral capsid. Most capsids appear to be large particles with an icosahedral symmetry of T=4 and consist of 240 copies of capsid protein, though a fraction forms smaller T=3 particles consisting of 180 capsid proteins. Entering capsids are transported along microtubules to the nucleus. Phosphorylation of the capsid is thought to induce exposure of nuclear localization signal in the C-terminal portion of the capsid protein that allows binding to the nuclear pore complex via the importin (karyopherin-) alpha and beta. Capsids are imported in intact form through the nuclear pore into the nuclear basket, where it probably binds NUP153. Only capsids that contain the mature viral genome can release the viral DNA and capsid protein into the nucleoplasm. Immature capsids get stuck in the basket. Capsids encapsulate the pre-genomic RNA and the P protein. Pre-genomic RNA is reverse-transcribed into DNA while the capsid is still in the cytoplasm. The capsid can then either be directed to the nucleus, providing more genomes for transcription, or bud through the endoplasmic reticulum to provide new virions. This is Capsid protein from Homo sapiens (Human).